Consider the following 103-residue polypeptide: MESVQELIPLAKEMMTQKSRGKLVKLYVLGSVLAFFGVVLGLVETVCSPFTAASRLRDQEAAVAELRDACEQQSLHKQALIAEGKTQEATLCSRALSLRQHAS.

Directly interacts with BCL2; this interaction prevents the formation of the anti-apoptotic BAX-BCL2 complex.

The protein resides in the mitochondrion. Promotes apoptosis by binding to BCL2, hence preventing the formation of protective BCL2-BAX heterodimers. The sequence is that of G0/G1 switch protein 2 (G0s2) from Rattus norvegicus (Rat).